Here is a 360-residue protein sequence, read N- to C-terminus: Photosystem II protein D1 (360 aa).

The next 3 membrane-spanning stretches (helical) occupy residues 29–46 (YIGW…TATS), 118–133 (HFLL…EWEL), and 142–156 (WIFV…AASA). Chlorophyll a is bound at residue His-118. Tyr-126 provides a ligand contact to pheophytin a. Asp-170 and Glu-189 together coordinate [CaMn4O5] cluster. A helical transmembrane segment spans residues 197 to 218 (FHMAGVAGVFGGSLFSAMHGSL). His-198 contributes to the chlorophyll a binding site. Residues His-215 and 264–265 (SF) each bind a quinone. His-215 provides a ligand contact to Fe cation. His-272 serves as a coordination point for Fe cation. A helical transmembrane segment spans residues 274–288 (FLAAWPVVGIWLTAM). [CaMn4O5] cluster contacts are provided by His-332, Glu-333, Asp-342, and Ala-344. A propeptide spanning residues 345–360 (SGDVLPVALNAPAVNG) is cleaved from the precursor.

The protein belongs to the reaction center PufL/M/PsbA/D family. In terms of assembly, PSII is composed of 1 copy each of membrane proteins PsbA, PsbB, PsbC, PsbD, PsbE, PsbF, PsbH, PsbI, PsbJ, PsbK, PsbL, PsbM, PsbT, PsbX, PsbY, PsbZ, Psb30/Ycf12, at least 3 peripheral proteins of the oxygen-evolving complex and a large number of cofactors. It forms dimeric complexes. The D1/D2 heterodimer binds P680, chlorophylls that are the primary electron donor of PSII, and subsequent electron acceptors. It shares a non-heme iron and each subunit binds pheophytin, quinone, additional chlorophylls, carotenoids and lipids. D1 provides most of the ligands for the Mn4-Ca-O5 cluster of the oxygen-evolving complex (OEC). There is also a Cl(-1) ion associated with D1 and D2, which is required for oxygen evolution. The PSII complex binds additional chlorophylls, carotenoids and specific lipids. serves as cofactor. In terms of processing, tyr-161 forms a radical intermediate that is referred to as redox-active TyrZ, YZ or Y-Z. C-terminally processed by CTPA; processing is essential to allow assembly of the oxygen-evolving complex and thus photosynthetic growth.

The protein localises to the plastid. The protein resides in the chloroplast thylakoid membrane. It catalyses the reaction 2 a plastoquinone + 4 hnu + 2 H2O = 2 a plastoquinol + O2. Its function is as follows. Photosystem II (PSII) is a light-driven water:plastoquinone oxidoreductase that uses light energy to abstract electrons from H(2)O, generating O(2) and a proton gradient subsequently used for ATP formation. It consists of a core antenna complex that captures photons, and an electron transfer chain that converts photonic excitation into a charge separation. The D1/D2 (PsbA/PsbD) reaction center heterodimer binds P680, the primary electron donor of PSII as well as several subsequent electron acceptors. The polypeptide is Photosystem II protein D1 (Trieres chinensis (Marine centric diatom)).